Here is a 453-residue protein sequence, read N- to C-terminus: Probable glycine dehydrogenase (decarboxylating) subunit 1 (453 aa).

It belongs to the GcvP family. N-terminal subunit subfamily. As to quaternary structure, the glycine cleavage system is composed of four proteins: P, T, L and H. In this organism, the P 'protein' is a heterodimer of two subunits.

It carries out the reaction N(6)-[(R)-lipoyl]-L-lysyl-[glycine-cleavage complex H protein] + glycine + H(+) = N(6)-[(R)-S(8)-aminomethyldihydrolipoyl]-L-lysyl-[glycine-cleavage complex H protein] + CO2. Functionally, the glycine cleavage system catalyzes the degradation of glycine. The P protein binds the alpha-amino group of glycine through its pyridoxal phosphate cofactor; CO(2) is released and the remaining methylamine moiety is then transferred to the lipoamide cofactor of the H protein. This is Probable glycine dehydrogenase (decarboxylating) subunit 1 from Methylococcus capsulatus (strain ATCC 33009 / NCIMB 11132 / Bath).